Here is a 576-residue protein sequence, read N- to C-terminus: Arginine--tRNA ligase (576 aa).

Positions 122 to 132 match the 'HIGH' region motif; sequence PNVAKQMHVGH.

This sequence belongs to the class-I aminoacyl-tRNA synthetase family. Monomer.

It localises to the cytoplasm. The enzyme catalyses tRNA(Arg) + L-arginine + ATP = L-arginyl-tRNA(Arg) + AMP + diphosphate. The polypeptide is Arginine--tRNA ligase (Yersinia enterocolitica serotype O:8 / biotype 1B (strain NCTC 13174 / 8081)).